The primary structure comprises 633 residues: Chaperone protein HtpG (633 aa).

Residues 1-341 are a; substrate-binding; that stretch reads MTAPHETMSF…SADLPLNVSR (341 aa). Residues 342-562 form a b region; it reads ELLQESRDVK…EGDMSGYLQR (221 aa). Positions 563–633 are c; the sequence is LLKQAGQKAP…YVQRVNKLLA (71 aa).

The protein belongs to the heat shock protein 90 family. Homodimer.

The protein resides in the cytoplasm. Molecular chaperone. Has ATPase activity. In Cupriavidus necator (strain ATCC 17699 / DSM 428 / KCTC 22496 / NCIMB 10442 / H16 / Stanier 337) (Ralstonia eutropha), this protein is Chaperone protein HtpG.